The sequence spans 821 residues: uncharacterized protein (821 aa).

Disordered stretches follow at residues 1 to 20 (MGQTNSRHSLIETDEPTTSS), 55 to 96 (SENY…EAYS), 134 to 205 (SYDF…NNEH), 240 to 263 (RLHQSPSPIPNSNDNDSQTRRSSW), 274 to 293 (PEEFPNASNPEAHSNFTPLN), 360 to 381 (NVLQNSSQNGNDQISSDPESNS), 430 to 450 (TSEDHAPTMTQENQSLHNESR), 467 to 497 (EFSTDLPPTFERSNSTFSHPEPTRSDFSQAF), 512 to 535 (RNLFPTSNSGNQSTSSFSRYNQPT), and 549 to 641 (AQEP…SNQT). 2 stretches are compositionally biased toward polar residues: residues 58-88 (YADTPSRNTPNSSNGFPSETLVTSSAHCSTQ) and 185-203 (SLPSNSNSTYTTPLQSINN). Residues 279–293 (NASNPEAHSNFTPLN) show a composition bias toward polar residues. The span at 437–450 (TMTQENQSLHNESR) shows a compositional bias: polar residues. Low complexity-rich tracts occupy residues 517-529 (TSNSGNQSTSSFS) and 568-578 (SSLLDSSNSNS). Residues 579 to 622 (QRPFSTVPSESNVFSRNASGNFSMSQTHQPTTDNTSSFSTQPGR) show a composition bias toward polar residues. The RING-type; atypical zinc-finger motif lies at 766 to 809 (CLICLETYTNGDICRKLQACKHFFHQACIDQWLTTGNNSCPLCR).

This is an uncharacterized protein from Schizosaccharomyces pombe (strain 972 / ATCC 24843) (Fission yeast).